Consider the following 778-residue polypeptide: uncharacterized protein (778 aa).

One can recognise a PE domain in the interval 1 to 92; that stretch reads MSFVIAVPEA…GARSYVVAEA (92 aa). Disordered stretches follow at residues 125-163, 372-510, and 718-778; these read ADGTGAPGGPGGLLLGNGGNGGSGAPGQPGGAGGDAGLI, TGLA…GDAF, and QGGL…GADG. Gly residues-rich tracts occupy residues 402-429, 436-510, and 718-763; these read NQTGGNGGPGPAGGVGEAGGVGGQGGLG, DGTG…GDAF, and QGGL…GSSG.

Belongs to the mycobacterial PE family. PGRS subfamily.

This is an uncharacterized protein from Mycobacterium bovis (strain ATCC BAA-935 / AF2122/97).